The sequence spans 477 residues: Probable periplasmic serine endoprotease DegP-like (477 aa).

Residues 1 to 27 (MSIPRLKSYLTMFAAVLMLGQVLTAQA) form the signal peptide. Residues histidine 117, aspartate 147, and serine 220 each act as charge relay system in the active site. Residues 218–220 (GNS) and 275–279 (LGVVI) each bind substrate. 2 consecutive PDZ domains span residues 264–355 (LKKD…IRNG) and 361–466 (DISV…LRQG).

Belongs to the peptidase S1C family.

Its subcellular location is the periplasm. It catalyses the reaction Acts on substrates that are at least partially unfolded. The cleavage site P1 residue is normally between a pair of hydrophobic residues, such as Val-|-Val.. In terms of biological role, might be efficient in the degradation of transiently denatured and unfolded proteins which accumulate in the periplasm following stress conditions. The sequence is that of Probable periplasmic serine endoprotease DegP-like from Pseudomonas putida (strain GB-1).